Here is a 140-residue protein sequence, read N- to C-terminus: UPF0336 protein TW736 (140 aa).

The protein belongs to the UPF0336 family.

This Tropheryma whipplei (strain TW08/27) (Whipple's bacillus) protein is UPF0336 protein TW736.